The chain runs to 205 residues: MSVGILGTKVGMTQFFDEAGLSIPVTVIQVGPCVITQIKAVSTDGYNAIQVGYKQVAEQKLNKPLLGHLKKSQAPPLKYLREYEMKSTDDFEVSQILSTDLFQVGQKINVSSRSVGKGFSGYQKRHHFSRGPMSHGSKNHRQPGSIGAGTTPGRVYPGKNMAGQLGNKKVTIKNLQIVSINSENDLLIVKGAVPGKPGALVKISK.

The interval serine 129 to arginine 154 is disordered.

The protein belongs to the universal ribosomal protein uL3 family. Part of the 50S ribosomal subunit.

The protein localises to the plastid. The protein resides in the chloroplast. In terms of biological role, one of the primary rRNA binding proteins, it binds directly near the 3'-end of the 23S rRNA, where it nucleates assembly of the 50S subunit. This is Large ribosomal subunit protein uL3c (rpl3) from Pyropia yezoensis (Susabi-nori).